Reading from the N-terminus, the 121-residue chain is Ribosome-binding factor A (121 aa).

This sequence belongs to the RbfA family. In terms of assembly, monomer. Binds 30S ribosomal subunits, but not 50S ribosomal subunits or 70S ribosomes.

It localises to the cytoplasm. Functionally, one of several proteins that assist in the late maturation steps of the functional core of the 30S ribosomal subunit. Associates with free 30S ribosomal subunits (but not with 30S subunits that are part of 70S ribosomes or polysomes). Required for efficient processing of 16S rRNA. May interact with the 5'-terminal helix region of 16S rRNA. The polypeptide is Ribosome-binding factor A (Brevibacillus brevis (strain 47 / JCM 6285 / NBRC 100599)).